The sequence spans 598 residues: Chromodomain Y-like protein (598 aa).

The segment at 1–76 (MTFQASHRSA…VDKRKNKKGK (76 aa)) is disordered. Positions 44 to 56 (PSISVSSEQSGAQ) are enriched in polar residues. The Chromo domain maps to 61 to 121 (LQVERIVDKR…RHTEKQKEST (61 aa)). The interaction with EZH2 stretch occupies residues 61-309 (LQVERIVDKR…NIQTSVTGVT (249 aa)). Residues 65 to 76 (RIVDKRKNKKGK) are compositionally biased toward basic and acidic residues. Ser88 is modified (phosphoserine). Residues 112-121 (RHTEKQKEST) show a composition bias toward basic and acidic residues. A disordered region spans residues 112–149 (RHTEKQKESTLTRTNRTSPNNARKQISRSTNSNFSKTS). The segment covering 122-149 (LTRTNRTSPNNARKQISRSTNSNFSKTS) has biased composition (polar residues). Residue Lys135 is modified to N6,N6,N6-trimethyllysine; by EHMT2; alternate. Lys135 is subject to N6,N6-dimethyllysine; by EHMT2; alternate. Lys135 carries the post-translational modification N6-methyllysine; by EHMT2; alternate. Phosphoserine occurs at positions 170, 201, and 216. Positions 204-226 (KSRTAVDGFQSESPEKLDPVEQG) are disordered. Positions 362–594 (SENNSLNPEV…DSMLKYLQRK (233 aa)) are acetyl-CoA-binding domain.

As to quaternary structure, forms multimers and multimerization is required for stable binding to chromatin. Interacts with HDAC1 and HDAC2 via its C-terminal acetyl-CoA-binding domain. Interacts with EZH2, EED, SUZ12, REST, EHMT1 and EHMT2. Part of a complex containing at least CDYL, REST, WIZ, SETB1, EHMT1 and EHMT2. Part of a complex containing at least CDYL, MIER1, MIER2, HDAC1 and HDAC2. Interacts with CHAF1A and CHAF1B; bridging the CAF-1 complex to the MCM2-7 (MCM) complex. Interacts with MCM3 and MCM5; bridging the CAF-1 complex to the MCM2-7 (MCM) complex. Recruited to Xist RNA-coated X chromosome. Interacts with EHMT2 and PRDM9; interaction only takes place when PRDM9 is bound to hotspot DNA. Expressed in the hippocampus with reduced expression in epileptic tissue compared to normal adjacent tissue (at protein level). Ubiquitous. Expressed at moderate levels in all tissues examined. Isoform 2: Most abundantly expressed isoform.

It is found in the nucleus. It localises to the chromosome. It catalyses the reaction 3-hydroxybutanoyl-CoA = (2E)-butenoyl-CoA + H2O. Chromatin reader protein that recognizes and binds histone H3 trimethylated at 'Lys-9', dimethylated at 'Lys-27' and trimethylated at 'Lys-27' (H3K9me3, H3K27me2 and H3K27me3, respectively). Part of multimeric repressive chromatin complexes, where it is required for transmission and restoration of repressive histone marks, thereby preserving the epigenetic landscape. Required for chromatin targeting and maximal enzymatic activity of Polycomb repressive complex 2 (PRC2); acts as a positive regulator of PRC2 activity by bridging the pre-existing histone H3K27me3 and newly recruited PRC2 on neighboring nucleosomes. Acts as a corepressor for REST by facilitating histone-lysine N-methyltransferase EHMT2 recruitment and H3K9 dimethylation at REST target genes for repression. Involved in X chromosome inactivation in females: recruited to Xist RNA-coated X chromosome and facilitates propagation of H3K9me2 by anchoring EHMT2. Promotes EZH2 accumulation and H3K27me3 methylation at DNA double strand breaks (DSBs), thereby facilitating transcriptional repression at sites of DNA damage and homology-directed repair of DSBs. Required for neuronal migration during brain development by repressing expression of RHOA. By repressing the expression of SCN8A, contributes to the inhibition of intrinsic neuronal excitability and epileptogenesis. In addition to acting as a chromatin reader, acts as a hydro-lyase. Shows crotonyl-coA hydratase activity by mediating the conversion of crotonyl-CoA ((2E)-butenoyl-CoA) to beta-hydroxybutyryl-CoA (3-hydroxybutanoyl-CoA), thereby acting as a negative regulator of histone crotonylation. Histone crotonylation is required during spermatogenesis; down-regulation of histone crotonylation by CDYL regulates the reactivation of sex chromosome-linked genes in round spermatids and histone replacement in elongating spermatids. By regulating histone crotonylation and trimethylation of H3K27, may be involved in stress-induced depression-like behaviors, possibly by regulating VGF expression. Its function is as follows. Not able to recognize and bind histone H3K9me3, histone H3K27me2 and histone H3K27me3, due to the presence of a N-terminal extension that inactivates the chromo domain. Functionally, not able to recognize and bind histone H3K9me3, histone H3K27me2 and histone H3K27me3, due to the absence of the chromo domain. Acts as a negative regulator of isoform 2 by displacing isoform 2 from chromatin. This chain is Chromodomain Y-like protein, found in Homo sapiens (Human).